The primary structure comprises 160 residues: Phosphopantetheine adenylyltransferase (160 aa).

Ser8 contributes to the substrate binding site. ATP-binding positions include Ser8–Phe9 and His16. Substrate is bound by residues Lys40, Leu73, and Lys87. ATP contacts are provided by residues Gly88–Arg90, Glu98, and Tyr122–Thr128.

This sequence belongs to the bacterial CoaD family. In terms of assembly, homohexamer. Mg(2+) is required as a cofactor.

The protein resides in the cytoplasm. It catalyses the reaction (R)-4'-phosphopantetheine + ATP + H(+) = 3'-dephospho-CoA + diphosphate. It functions in the pathway cofactor biosynthesis; coenzyme A biosynthesis; CoA from (R)-pantothenate: step 4/5. Functionally, reversibly transfers an adenylyl group from ATP to 4'-phosphopantetheine, yielding dephospho-CoA (dPCoA) and pyrophosphate. In Corynebacterium glutamicum (strain R), this protein is Phosphopantetheine adenylyltransferase.